Consider the following 264-residue polypeptide: Non-homologous end-joining factor xrc4 (264 aa).

Positions 173 to 186 (RNNEDNEDNHHINY) are enriched in basic and acidic residues. A disordered region spans residues 173-264 (RNNEDNEDNH…SHESSETVSE (92 aa)). Residues 200–209 (QEGVNSSAVS) are compositionally biased toward polar residues. Residues 248–264 (DDSHRRSSHESSETVSE) are compositionally biased toward basic and acidic residues.

Belongs to the XRCC4-XLF family. XRCC4 subfamily. As to quaternary structure, interacts with lig4; the interaction is direct.

Its subcellular location is the nucleus. In terms of biological role, involved in double-strand break repair via non-homologous end joining (NHEJ); the repair of a double-strand break in DNA in which the two broken ends are rejoined with little or no sequence complementarity. In Schizosaccharomyces pombe (strain 972 / ATCC 24843) (Fission yeast), this protein is Non-homologous end-joining factor xrc4.